Reading from the N-terminus, the 115-residue chain is uncharacterized protein (115 aa).

This is an uncharacterized protein from Rickettsia prowazekii (strain Madrid E).